Consider the following 85-residue polypeptide: Translation initiation factor IF-1 2 (85 aa).

The S1-like domain maps to 1–72; it reads MAKEELIEMH…SKGRITFRHI (72 aa).

This sequence belongs to the IF-1 family. Component of the 30S ribosomal translation pre-initiation complex which assembles on the 30S ribosome in the order IF-2 and IF-3, IF-1 and N-formylmethionyl-tRNA(fMet); mRNA recruitment can occur at any time during PIC assembly.

The protein resides in the cytoplasm. Its function is as follows. One of the essential components for the initiation of protein synthesis. Stabilizes the binding of IF-2 and IF-3 on the 30S subunit to which N-formylmethionyl-tRNA(fMet) subsequently binds. Helps modulate mRNA selection, yielding the 30S pre-initiation complex (PIC). Upon addition of the 50S ribosomal subunit IF-1, IF-2 and IF-3 are released leaving the mature 70S translation initiation complex. This Polaromonas sp. (strain JS666 / ATCC BAA-500) protein is Translation initiation factor IF-1 2.